The primary structure comprises 302 residues: tRNA-cytidine(32) 2-sulfurtransferase (302 aa).

The PP-loop motif signature appears at 43–48; the sequence is SGGKDS. [4Fe-4S] cluster is bound by residues cysteine 118, cysteine 121, and cysteine 209.

The protein belongs to the TtcA family. In terms of assembly, homodimer. Requires Mg(2+) as cofactor. [4Fe-4S] cluster serves as cofactor.

It localises to the cytoplasm. It carries out the reaction cytidine(32) in tRNA + S-sulfanyl-L-cysteinyl-[cysteine desulfurase] + AH2 + ATP = 2-thiocytidine(32) in tRNA + L-cysteinyl-[cysteine desulfurase] + A + AMP + diphosphate + H(+). The protein operates within tRNA modification. Its function is as follows. Catalyzes the ATP-dependent 2-thiolation of cytidine in position 32 of tRNA, to form 2-thiocytidine (s(2)C32). The sulfur atoms are provided by the cysteine/cysteine desulfurase (IscS) system. The sequence is that of tRNA-cytidine(32) 2-sulfurtransferase from Polynucleobacter necessarius subsp. necessarius (strain STIR1).